A 313-amino-acid chain; its full sequence is Ribosomal RNA small subunit methyltransferase H (313 aa).

S-adenosyl-L-methionine contacts are provided by residues Gly-35–His-37, Asp-55, Phe-79, Asp-101, and Gln-108.

Belongs to the methyltransferase superfamily. RsmH family.

The protein resides in the cytoplasm. It carries out the reaction cytidine(1402) in 16S rRNA + S-adenosyl-L-methionine = N(4)-methylcytidine(1402) in 16S rRNA + S-adenosyl-L-homocysteine + H(+). In terms of biological role, specifically methylates the N4 position of cytidine in position 1402 (C1402) of 16S rRNA. This Salmonella arizonae (strain ATCC BAA-731 / CDC346-86 / RSK2980) protein is Ribosomal RNA small subunit methyltransferase H.